The primary structure comprises 804 residues: Cyclic di-GMP-binding protein (804 aa).

Residues 1–18 (MKMVSLIALLVFATGAQA) form the signal peptide. Residues 19–766 (APIASKAPAH…DWYMHNHPFR (748 aa)) lie on the Periplasmic side of the membrane. Residues 24-69 (KAPAHQPTGSDLPPLPAAAPVAPAAQPSAQAVDPASAAPASDAGSA) are disordered. The chain crosses the membrane as a helical span at residues 767 to 787 (VIVVGLVGCLLVVAVLVRALF). Residues 788 to 804 (RHAMFRRRQLQEERQKS) lie on the Cytoplasmic side of the membrane.

This sequence belongs to the AcsB/BcsB family. In terms of assembly, tightly associated with the cellulose synthase catalytic subunit.

It localises to the cell inner membrane. Its pathway is glycan metabolism; bacterial cellulose biosynthesis. In terms of biological role, binds the cellulose synthase activator, bis-(3'-5') cyclic diguanylic acid (c-di-GMP). The polypeptide is Cyclic di-GMP-binding protein (bcsBI) (Komagataeibacter xylinus (Gluconacetobacter xylinus)).